The following is a 355-amino-acid chain: NAD-dependent protein deacylase sirtuin-6 (355 aa).

Residue Ser-2 is modified to N-acetylserine. The residue at position 10 (Ser-10) is a Phosphoserine; by MAPK8. Residues 27–272 (PEELERKVWE…TRLMKHLGLE (246 aa)) enclose the Deacetylase sirtuin-type domain. At Lys-33 the chain carries N6-acetyllysine. NAD(+)-binding residues include Ala-53, Thr-57, Phe-64, Arg-65, Trp-71, Gln-113, and His-133. His-133 functions as the Proton acceptor in the catalytic mechanism. Zn(2+) is bound by residues Cys-141, Cys-144, and Cys-166. Residue Lys-170 forms a Glycyl lysine isopeptide (Lys-Gly) (interchain with G-Cter in ubiquitin) linkage. Zn(2+) is bound at residue Cys-177. The NAD(+) site is built by Gly-214, Ser-216, Asn-240, Gln-242, and Val-258. The interval 284–355 (RALPPLPRPP…KRVKAKAVPS (72 aa)) is disordered. Residues 287–296 (PPLPRPPTPK) show a composition bias toward pro residues. Thr-294 is subject to Phosphothreonine. Ser-303 and Ser-330 each carry phosphoserine. The segment covering 343 to 355 (RPPKRVKAKAVPS) has biased composition (basic residues).

It belongs to the sirtuin family. Class IV subfamily. In terms of assembly, homodimer; binds to nucleosomes and DNA ends as a homodimer. Interacts with RELA; interferes with RELA binding to target DNA. Interacts with SMARCA5; promoting recruitment of SMARCA5/SNF2H to double-strand breaks (DSBs) sites. Interacts with the mTORC2 complex; preventing the ability of SIRT6 to deacetylate FOXO1. Interacts with the CLOCK-BMAL1 complex; recruited by the CLOCK-BMAL1 complex to regulate expression of clock-controlled genes. Interacts with CSNK2A2; preventing CSNK2A2 localization to the nucleus. (Microbial infection) Interacts with Kaposi's sarcoma-associated herpesvirus protein VIRF-1; this interaction prevents SIRT6 deubiquitination by USP10. Zn(2+) is required as a cofactor. Acetylated at Lys-33. Deacetylation at Lys-33 by SIRT1 promotes homomultimerization and binding to double-strand breaks (DSBs) sites. In terms of processing, phosphorylation at Ser-10 by MAPK8/JNK1 in response to oxidative stress stimulates the mono-ADP-ribosyltransferase activity on PARP1, leading to PARP1 recruitment to double-strand breaks (DSBs). Post-translationally, monoubiquitinated at Lys-170 by STUB1/CHIP, preventing its degradation by the proteasome. Deubiquitinated by USP10, also preventing its degradation by the proteasome. Sumoylated, leading to specifically decrease ability to deacetylate histone H3 at 'Lys-56' (H3K56ac).

It is found in the nucleus. The protein resides in the chromosome. Its subcellular location is the telomere. The protein localises to the endoplasmic reticulum. The catalysed reaction is N(6)-acetyl-L-lysyl-[protein] + NAD(+) + H2O = 2''-O-acetyl-ADP-D-ribose + nicotinamide + L-lysyl-[protein]. It catalyses the reaction N(6)-tetradecanoyl-L-lysyl-[protein] + NAD(+) + H2O = 2''-O-tetradecanoyl-ADP-D-ribose + nicotinamide + L-lysyl-[protein]. It carries out the reaction N(6)-hexadecanoyl-L-lysyl-[protein] + NAD(+) + H2O = 2''-O-hexadecanoyl-ADP-D-ribose + nicotinamide + L-lysyl-[protein]. The enzyme catalyses L-lysyl-[protein] + NAD(+) = N(6)-(ADP-D-ribosyl)-L-lysyl-[protein] + nicotinamide + H(+). The catalysed reaction is L-arginyl-[protein] + NAD(+) = N(omega)-(ADP-D-ribosyl)-L-arginyl-[protein] + nicotinamide + H(+). With respect to regulation, compared to the defatty-acylase activity, the protein deacetylase activity is weak in vitro, and requires activation. The histone deacetylase activity is strongly activated upon binding to nucleosomes and chromatin in vivo. Two molecules of SIRT6 associate with the acidic patch of one nucleosome, while the C-terminal disordered region of SIRT6 associates with nucleosomal DNA, leading to efficient histone deacetylation. The protein-lysine deacetylase activity is also activated by long-chain free fatty-acids. The histone deacetylase activity is specifically repressed by long non-coding RNA lncPRESS1, which binds to SIRT6 and prevents chromatin-binding, thereby promoting stem cell pluripotency. Due to its essential role as tumor suppressor and involvement in DNA repair and life span, extensive research is made for the identification of small compound regulators of SIRT6. Nitro-fatty acids (nitro-oleic acid and nitro-conjugated linoleic acid) strongly stimulate the protein-lysine deacetylase activity by forming a covalent Michael adduct formation with Cys-18. Activated by UBCS039 (4-(pyridin-3-yl)-4,5- dihydropyrrolo[1,2-a]quinoxaline). Inhibited by non-selective hydroxamate trichostatin A inhibitor. Deacetylase activity is activated by fluvastatin and quercetin-based compounds. The protein-lysine deacetylase activity, but not the defatty-acylase activity, is specifically activated by MDL-800 and MDL-801 activators in vivo, enhancing the histone deacetylase and tumor suppressor activities. MDL-800 and MDL-801 selectively activate SIRT6 and not other members of the sirtuin family. The binding-mode of MDL-801 is however subject to discussion. In terms of biological role, NAD-dependent protein deacetylase, deacylase and mono-ADP-ribosyltransferase that plays an essential role in DNA damage repair, telomere maintenance, metabolic homeostasis, inflammation, tumorigenesis and aging. Displays protein-lysine deacetylase or defatty-acylase (demyristoylase and depalmitoylase) activity, depending on the context. Acts as a key histone deacetylase by catalyzing deacetylation of histone H3 at 'Lys-9', 'Lys-18' and 'Lys-56' (H3K9ac, H3K18ac and H3K56ac, respectively), suppressing target gene expression of several transcription factors, including NF-kappa-B. Acts as an inhibitor of transcription elongation by mediating deacetylation of H3K9ac and H3K56ac, preventing release of NELFE from chromatin and causing transcriptional pausing. Involved in DNA repair by promoting double-strand break (DSB) repair: acts as a DSB sensor by recognizing and binding DSB sites, leading to (1) recruitment of DNA repair proteins, such as SMARCA5/SNF2H, and (2) deacetylation of histone H3K9ac and H3K56ac. SIRT6 participation to DSB repair is probably involved in extension of life span. Also promotes DNA repair by deacetylating non-histone proteins, such as DDB2 and p53/TP53. Specifically deacetylates H3K18ac at pericentric heterochromatin, thereby maintaining pericentric heterochromatin silencing at centromeres and protecting against genomic instability and cellular senescence. Involved in telomere maintenance by catalyzing deacetylation of histone H3 in telomeric chromatin, regulating telomere position effect and telomere movement in response to DNA damage. Required for embryonic stem cell differentiation by mediating histone deacetylation of H3K9ac. Plays a major role in metabolism by regulating processes such as glycolysis, gluconeogenesis, insulin secretion and lipid metabolism. Inhibits glycolysis via histone deacetylase activity and by acting as a corepressor of the transcription factor HIF1A, thereby controlling the expression of multiple glycolytic genes. Has tumor suppressor activity by repressing glycolysis, thereby inhibiting the Warburg effect. Also regulates glycolysis and tumorigenesis by mediating deacetylation and nuclear export of non-histone proteins, such as isoform M2 of PKM (PKM2). Acts as a negative regulator of gluconeogenesis by mediating deacetylation of non-histone proteins, such as FOXO1 and KAT2A/GCN5. Promotes beta-oxidation of fatty acids during fasting by catalyzing deacetylation of NCOA2, inducing coactivation of PPARA. Acts as a regulator of lipid catabolism in brown adipocytes, both by catalyzing deacetylation of histones and non-histone proteins, such as FOXO1. Also acts as a regulator of circadian rhythms, both by regulating expression of clock-controlled genes involved in lipid and carbohydrate metabolism, and by catalyzing deacetylation of PER2. The defatty-acylase activity is specifically involved in regulation of protein secretion. Has high activity toward long-chain fatty acyl groups and mediates protein-lysine demyristoylation and depalmitoylation of target proteins, such as RRAS2 and TNF, thereby regulating their secretion. Also acts as a mono-ADP-ribosyltransferase by mediating mono-ADP-ribosylation of PARP1, TRIM28/KAP1 or SMARCC2/BAF170. Mono-ADP-ribosyltransferase activity is involved in DNA repair, cellular senescence, repression of LINE-1 retrotransposon elements and regulation of transcription. The sequence is that of NAD-dependent protein deacylase sirtuin-6 from Homo sapiens (Human).